A 141-amino-acid polypeptide reads, in one-letter code: Glutamyl-tRNA(Gln) amidotransferase subunit C, chloroplastic/mitochondrial (141 aa).

The protein belongs to the GatC family. As to quaternary structure, subunit of the heterotrimeric GatCAB amidotransferase (AdT) complex, composed of A, B and C subunits.

Its subcellular location is the mitochondrion. It is found in the plastid. It localises to the chloroplast. It carries out the reaction L-glutamyl-tRNA(Gln) + L-glutamine + ATP + H2O = L-glutaminyl-tRNA(Gln) + L-glutamate + ADP + phosphate + H(+). Its function is as follows. Allows the formation of correctly charged Gln-tRNA(Gln) through the transamidation of misacylated Glu-tRNA(Gln) in chloroplasts and mitochondria. The reaction takes place in the presence of glutamine and ATP through an activated gamma-phospho-Glu-tRNA(Gln). The sequence is that of Glutamyl-tRNA(Gln) amidotransferase subunit C, chloroplastic/mitochondrial from Populus trichocarpa (Western balsam poplar).